The sequence spans 331 residues: 6-phosphogluconolactonase (331 aa).

This sequence belongs to the cycloisomerase 2 family.

The catalysed reaction is 6-phospho-D-glucono-1,5-lactone + H2O = 6-phospho-D-gluconate + H(+). Its pathway is carbohydrate degradation; pentose phosphate pathway; D-ribulose 5-phosphate from D-glucose 6-phosphate (oxidative stage): step 2/3. In terms of biological role, catalyzes the hydrolysis of 6-phosphogluconolactone to 6-phosphogluconate. In Salmonella paratyphi B (strain ATCC BAA-1250 / SPB7), this protein is 6-phosphogluconolactonase.